Here is a 253-residue protein sequence, read N- to C-terminus: Isoprenyl transferase (253 aa).

Aspartate 30 is an active-site residue. Residue aspartate 30 coordinates Mg(2+). Substrate contacts are provided by residues 31 to 34 (GNRR), tryptophan 35, histidine 51, and 79 to 81 (STE). Catalysis depends on asparagine 82, which acts as the Proton acceptor. Substrate contacts are provided by residues phenylalanine 83, arginine 85, arginine 202, and 208-210 (RVS). Position 221 (glutamate 221) interacts with Mg(2+).

This sequence belongs to the UPP synthase family. In terms of assembly, homodimer. Mg(2+) serves as cofactor.

In terms of biological role, catalyzes the condensation of isopentenyl diphosphate (IPP) with allylic pyrophosphates generating different type of terpenoids. The chain is Isoprenyl transferase from Chlamydia trachomatis serovar D (strain ATCC VR-885 / DSM 19411 / UW-3/Cx).